A 205-amino-acid chain; its full sequence is GTP cyclohydrolase-2 (205 aa).

Residue 49-53 (RVHSE) participates in GTP binding. Positions 54, 65, and 67 each coordinate Zn(2+). GTP is bound by residues Q70, 92-94 (EGR), and T114. The active-site Proton acceptor is the D126. R128 functions as the Nucleophile in the catalytic mechanism. GTP contacts are provided by T149 and K154.

Belongs to the GTP cyclohydrolase II family. Zn(2+) serves as cofactor.

It carries out the reaction GTP + 4 H2O = 2,5-diamino-6-hydroxy-4-(5-phosphoribosylamino)-pyrimidine + formate + 2 phosphate + 3 H(+). It participates in cofactor biosynthesis; riboflavin biosynthesis; 5-amino-6-(D-ribitylamino)uracil from GTP: step 1/4. Functionally, catalyzes the conversion of GTP to 2,5-diamino-6-ribosylamino-4(3H)-pyrimidinone 5'-phosphate (DARP), formate and pyrophosphate. In Pseudomonas fluorescens (strain SBW25), this protein is GTP cyclohydrolase-2.